Consider the following 236-residue polypeptide: Small ribosomal subunit protein uS5 (236 aa).

The region spanning Glu-61 to Ile-124 is the S5 DRBM domain.

The protein belongs to the universal ribosomal protein uS5 family. Part of the 30S ribosomal subunit. Contacts protein S4.

Functionally, with S4 and S12 plays an important role in translational accuracy. The sequence is that of Small ribosomal subunit protein uS5 from Pyrococcus horikoshii (strain ATCC 700860 / DSM 12428 / JCM 9974 / NBRC 100139 / OT-3).